A 304-amino-acid polypeptide reads, in one-letter code: Glutaminase (304 aa).

Substrate is bound by residues serine 63, asparagine 114, glutamate 158, asparagine 165, tyrosine 189, tyrosine 240, and valine 258.

The protein belongs to the glutaminase family. Homotetramer.

It carries out the reaction L-glutamine + H2O = L-glutamate + NH4(+). The sequence is that of Glutaminase from Shewanella baltica (strain OS223).